We begin with the raw amino-acid sequence, 731 residues long: NADH-ubiquinone oxidoreductase 75 kDa subunit, mitochondrial (731 aa).

The N-terminal 27 residues, 1–27 (MIRAPLVKALGALGSPTHQMASRAVRT), are a transit peptide targeting the mitochondrion. Residues 40–118 (EKIEVFVDDI…GWRIKTNSDL (79 aa)) form the 2Fe-2S ferredoxin-type domain. [2Fe-2S] cluster is bound by residues Cys74, Cys85, Cys88, and Cys102. The region spanning 118–157 (LTRKAREGVMEFLLMNHPLDCPICDQGGECDLQDQAMAFG) is the 4Fe-4S His(Cys)3-ligated-type domain. [4Fe-4S] cluster is bound by residues His134, Cys138, Cys141, Cys147, Cys190, Cys193, Cys196, and Cys240. Positions 259 to 315 (IRKVSSIDVLDAVGSNIVVSTRTNEVLRILPRENEDVNEEWLADKSRFACDGLKRQR) constitute a 4Fe-4S Mo/W bis-MGD-type domain.

Belongs to the complex I 75 kDa subunit family. As to quaternary structure, complex I is composed of about 45 different subunits. It depends on [2Fe-2S] cluster as a cofactor. [4Fe-4S] cluster serves as cofactor.

It localises to the mitochondrion inner membrane. The catalysed reaction is a ubiquinone + NADH + 5 H(+)(in) = a ubiquinol + NAD(+) + 4 H(+)(out). In terms of biological role, core subunit of the mitochondrial membrane respiratory chain NADH dehydrogenase (Complex I) that is believed to belong to the minimal assembly required for catalysis. Complex I functions in the transfer of electrons from NADH to the respiratory chain. The immediate electron acceptor for the enzyme is believed to be ubiquinone. This is the largest subunit of complex I and it is a component of the iron-sulfur (IP) fragment of the enzyme. It may form part of the active site crevice where NADH is oxidized. The protein is NADH-ubiquinone oxidoreductase 75 kDa subunit, mitochondrial of Drosophila melanogaster (Fruit fly).